Here is a 680-residue protein sequence, read N- to C-terminus: Heterokaryon incompatibility protein 6, OR allele (680 aa).

In terms of biological role, involved in the non-self-recognition during asexual growth of N.crassa. This process involves restriction of heterokaryon formation via genetic differences at 11 het loci, including mating type. This Neurospora crassa (strain ATCC 24698 / 74-OR23-1A / CBS 708.71 / DSM 1257 / FGSC 987) protein is Heterokaryon incompatibility protein 6, OR allele (het-6).